A 179-amino-acid polypeptide reads, in one-letter code: Large ribosomal subunit protein uL5 (179 aa).

The protein belongs to the universal ribosomal protein uL5 family. As to quaternary structure, part of the 50S ribosomal subunit; part of the 5S rRNA/L5/L18/L25 subcomplex. Contacts the 5S rRNA and the P site tRNA. Forms a bridge to the 30S subunit in the 70S ribosome.

Its function is as follows. This is one of the proteins that bind and probably mediate the attachment of the 5S RNA into the large ribosomal subunit, where it forms part of the central protuberance. In the 70S ribosome it contacts protein S13 of the 30S subunit (bridge B1b), connecting the 2 subunits; this bridge is implicated in subunit movement. Contacts the P site tRNA; the 5S rRNA and some of its associated proteins might help stabilize positioning of ribosome-bound tRNAs. This is Large ribosomal subunit protein uL5 from Bacillus mycoides (strain KBAB4) (Bacillus weihenstephanensis).